Reading from the N-terminus, the 448-residue chain is Asparagine--tRNA ligase (448 aa).

The protein belongs to the class-II aminoacyl-tRNA synthetase family. In terms of assembly, homodimer.

It is found in the cytoplasm. The catalysed reaction is tRNA(Asn) + L-asparagine + ATP = L-asparaginyl-tRNA(Asn) + AMP + diphosphate + H(+). The sequence is that of Asparagine--tRNA ligase from Streptococcus pyogenes serotype M4 (strain MGAS10750).